A 389-amino-acid polypeptide reads, in one-letter code: Chorismate synthase (389 aa).

NADP(+) is bound by residues Arg40 and Arg46. Residues 131–133, 252–253, Gly297, 312–316, and Arg338 each bind FMN; these read RSS, NA, and KPIPT.

It belongs to the chorismate synthase family. In terms of assembly, homotetramer. The cofactor is FMNH2.

The enzyme catalyses 5-O-(1-carboxyvinyl)-3-phosphoshikimate = chorismate + phosphate. Its pathway is metabolic intermediate biosynthesis; chorismate biosynthesis; chorismate from D-erythrose 4-phosphate and phosphoenolpyruvate: step 7/7. Functionally, catalyzes the anti-1,4-elimination of the C-3 phosphate and the C-6 proR hydrogen from 5-enolpyruvylshikimate-3-phosphate (EPSP) to yield chorismate, which is the branch point compound that serves as the starting substrate for the three terminal pathways of aromatic amino acid biosynthesis. This reaction introduces a second double bond into the aromatic ring system. This chain is Chorismate synthase, found in Lactiplantibacillus plantarum (strain ATCC BAA-793 / NCIMB 8826 / WCFS1) (Lactobacillus plantarum).